We begin with the raw amino-acid sequence, 56 residues long: Per os infectivity factor AC110 (56 aa).

Functionally, plays an essential role in the process of oral infection. May participate in the crossing of occlusion-derived virions through the host peritrophic membrane during oral infection. In Autographa californica nuclear polyhedrosis virus (AcMNPV), this protein is Per os infectivity factor AC110.